An 88-amino-acid polypeptide reads, in one-letter code: Molybdopterin synthase sulfur carrier subunit (88 aa).

Residue glycine 88 is modified to 1-thioglycine; alternate. Glycine 88 carries the glycyl adenylate; alternate modification.

This sequence belongs to the MoaD family. MOCS2A subfamily. In terms of assembly, heterotetramer; composed of 2 small (MOCS2A) and 2 large (MOCS2B) subunits. In terms of processing, C-terminal thiocarboxylation occurs in 2 steps, it is first acyl-adenylated (-COAMP) via the hesA/moeB/thiF part of MOCS3, then thiocarboxylated (-COSH) via the rhodanese domain of MOCS3.

The protein localises to the cytoplasm. It localises to the cytosol. The protein operates within cofactor biosynthesis; molybdopterin biosynthesis. Functionally, acts as a sulfur carrier required for molybdopterin biosynthesis. Component of the molybdopterin synthase complex that catalyzes the conversion of precursor Z into molybdopterin by mediating the incorporation of 2 sulfur atoms into precursor Z to generate a dithiolene group. In the complex, serves as sulfur donor by being thiocarboxylated (-COSH) at its C-terminus by MOCS3. After interaction with MOCS2B, the sulfur is then transferred to precursor Z to form molybdopterin. This Mus musculus (Mouse) protein is Molybdopterin synthase sulfur carrier subunit.